Here is a 355-residue protein sequence, read N- to C-terminus: UDP-N-acetylglucosamine--N-acetylmuramyl-(pentapeptide) pyrophosphoryl-undecaprenol N-acetylglucosamine transferase (355 aa).

UDP-N-acetyl-alpha-D-glucosamine is bound by residues 11–13 (TGG), Asn-123, Arg-162, Ser-185, Ile-239, 258–263 (ALTVSE), and Gln-284.

This sequence belongs to the glycosyltransferase 28 family. MurG subfamily.

The protein localises to the cell inner membrane. The enzyme catalyses di-trans,octa-cis-undecaprenyl diphospho-N-acetyl-alpha-D-muramoyl-L-alanyl-D-glutamyl-meso-2,6-diaminopimeloyl-D-alanyl-D-alanine + UDP-N-acetyl-alpha-D-glucosamine = di-trans,octa-cis-undecaprenyl diphospho-[N-acetyl-alpha-D-glucosaminyl-(1-&gt;4)]-N-acetyl-alpha-D-muramoyl-L-alanyl-D-glutamyl-meso-2,6-diaminopimeloyl-D-alanyl-D-alanine + UDP + H(+). The protein operates within cell wall biogenesis; peptidoglycan biosynthesis. Its function is as follows. Cell wall formation. Catalyzes the transfer of a GlcNAc subunit on undecaprenyl-pyrophosphoryl-MurNAc-pentapeptide (lipid intermediate I) to form undecaprenyl-pyrophosphoryl-MurNAc-(pentapeptide)GlcNAc (lipid intermediate II). This Hydrogenovibrio crunogenus (strain DSM 25203 / XCL-2) (Thiomicrospira crunogena) protein is UDP-N-acetylglucosamine--N-acetylmuramyl-(pentapeptide) pyrophosphoryl-undecaprenol N-acetylglucosamine transferase.